The sequence spans 259 residues: Hydroxyacylglutathione hydrolase (259 aa).

Positions 56, 58, 60, 61, 112, 133, and 171 each coordinate Zn(2+).

The protein belongs to the metallo-beta-lactamase superfamily. Glyoxalase II family. In terms of assembly, monomer. Requires Zn(2+) as cofactor.

The catalysed reaction is an S-(2-hydroxyacyl)glutathione + H2O = a 2-hydroxy carboxylate + glutathione + H(+). It participates in secondary metabolite metabolism; methylglyoxal degradation; (R)-lactate from methylglyoxal: step 2/2. In terms of biological role, thiolesterase that catalyzes the hydrolysis of S-D-lactoyl-glutathione to form glutathione and D-lactic acid. The polypeptide is Hydroxyacylglutathione hydrolase (Pseudomonas putida (strain W619)).